Reading from the N-terminus, the 304-residue chain is MFLFSRKTKTPISTYSDSYRAPTSIKEVYKDPPLWAWEANKFVTPGLTHTAQRHVDPDALQKMLKCAVQDYSYKGSIPSHPYFPEKYWLCPEEADRCNPNYLCGNPNYLCSNQYNTWRMGPYNCWNKCTTYLPRLPKEAGMETVVRGMPLVYPPKPERLNAYEREVVVNMLNSLSRNQPLPQITPRCGCVDPLPGRLPFQGYESACSGRHYCLRGMDYCVSGPPCTERRLRPLCTELPTVRSVSPCEHRSGMQCAVITPQPSYYPCPNLRWDTSHFKKTGGSQRNNYVVHPEFVSETYPDYHCW.

Belongs to the SPMIP6 family. As to quaternary structure, microtubule inner protein component of sperm flagellar doublet microtubules. Interacts with alpha-tubulin.

It is found in the cytoplasm. It localises to the cytoskeleton. The protein localises to the nucleus. Its subcellular location is the mitochondrion. The protein resides in the flagellum axoneme. Its function is as follows. May participate in intramanchette transport and midpiece formation of the sperm tail. May play a potential role in somatic cell proliferation. The sequence is that of Sperm microtubule inner protein 6 (SPMIP6) from Bos taurus (Bovine).